Reading from the N-terminus, the 300-residue chain is Haloalkane dehalogenase (300 aa).

The 124-residue stretch at 32 to 155 (AIVFQHGNPT…PAVRGVFQGF (124 aa)) folds into the AB hydrolase-1 domain. Residue D109 is the Nucleophile of the active site. The active-site Proton donor is the E133. H273 (proton acceptor) is an active-site residue.

It belongs to the haloalkane dehalogenase family. Type 2 subfamily. In terms of assembly, monomer.

It catalyses the reaction 1-haloalkane + H2O = a halide anion + a primary alcohol + H(+). In terms of biological role, catalyzes hydrolytic cleavage of carbon-halogen bonds in halogenated aliphatic compounds, leading to the formation of the corresponding primary alcohols, halide ions and protons. This Mycobacterium tuberculosis (strain ATCC 25177 / H37Ra) protein is Haloalkane dehalogenase.